Reading from the N-terminus, the 347-residue chain is Monopolin complex subunit LRS4 (347 aa).

A coiled-coil region spans residues 46-118; that stretch reads KKVVDETLFL…QISVDKHNKE (73 aa). Basic and acidic residues predominate over residues 112–130; it reads VDKHNKERTPSTGRDEQQR. Disordered regions lie at residues 112–183 and 208–230; these read VDKH…SLLS and RNDT…LQKS. Polar residues-rich tracts occupy residues 131–140 and 155–172; these read NSKAAHTSKP and NNQT…PTSQ. S168 and S230 each carry phosphoserine.

In terms of assembly, component of the monopolin complex composed of at least CSM1, LRS4 and MAM1. The complex associates with the kinetochore. Post-translationally, phosphorylated by CDC5. This phosphorylation is required for the location to the kinetochores during late pachytene.

It is found in the nucleus. The protein resides in the nucleolus. Its subcellular location is the chromosome. It localises to the centromere. Functionally, component of the monopolin complex which promotes monoorientation during meiosis I, required for chromosome segregation during meiosis. Involved in rDNA silencing. This is Monopolin complex subunit LRS4 (LRS4) from Saccharomyces cerevisiae (strain ATCC 204508 / S288c) (Baker's yeast).